The primary structure comprises 117 residues: Large ribosomal subunit protein bL20c (117 aa).

This sequence belongs to the bacterial ribosomal protein bL20 family.

Its subcellular location is the plastid. The protein resides in the chloroplast. Binds directly to 23S ribosomal RNA and is necessary for the in vitro assembly process of the 50S ribosomal subunit. It is not involved in the protein synthesizing functions of that subunit. The sequence is that of Large ribosomal subunit protein bL20c from Phalaenopsis aphrodite subsp. formosana (Moth orchid).